A 139-amino-acid polypeptide reads, in one-letter code: Large ribosomal subunit protein uL13 (139 aa).

The protein belongs to the universal ribosomal protein uL13 family. Part of the 50S ribosomal subunit.

Its function is as follows. This protein is one of the early assembly proteins of the 50S ribosomal subunit, although it is not seen to bind rRNA by itself. It is important during the early stages of 50S assembly. This is Large ribosomal subunit protein uL13 from Methanococcoides burtonii (strain DSM 6242 / NBRC 107633 / OCM 468 / ACE-M).